We begin with the raw amino-acid sequence, 214 residues long: MVKSTPMLYAADLACLKGDRLLFRGLSLHVAPGAMLRIAGPNGFGKTSLLRILCGLAHPEAGEIRWNGRPIAGDRESFHRTLLYLGHAPALNDLLTPLENLRFACAAAGDDVDEDACVDALVRIGLADQLDLPARVLSQGQRRRVGLARLFLGIRRSLWVLDEPFTALDAAAVADLATTLSDHCAAGGVVILTTHQDAPFAVPPTVLDLSEVAA.

Residues 8-212 (LYAADLACLK…PPTVLDLSEV (205 aa)) form the ABC transporter domain. An ATP-binding site is contributed by 40–47 (GPNGFGKT).

It belongs to the ABC transporter superfamily. CcmA exporter (TC 3.A.1.107) family. The complex is composed of two ATP-binding proteins (CcmA) and two transmembrane proteins (CcmB).

The protein resides in the cell inner membrane. The enzyme catalyses heme b(in) + ATP + H2O = heme b(out) + ADP + phosphate + H(+). Functionally, part of the ABC transporter complex CcmAB involved in the biogenesis of c-type cytochromes; once thought to export heme, this seems not to be the case, but its exact role is uncertain. Responsible for energy coupling to the transport system. The chain is Cytochrome c biogenesis ATP-binding export protein CcmA from Aromatoleum aromaticum (strain DSM 19018 / LMG 30748 / EbN1) (Azoarcus sp. (strain EbN1)).